A 135-amino-acid chain; its full sequence is Large ribosomal subunit protein mL54 (135 aa).

Belongs to the mitochondrion-specific ribosomal protein mL54 family. In terms of assembly, component of the mitochondrial ribosome large subunit (39S) which comprises a 16S rRNA and about 50 distinct proteins.

The protein localises to the mitochondrion. The protein is Large ribosomal subunit protein mL54 (mrpl54) of Danio rerio (Zebrafish).